Consider the following 336-residue polypeptide: Fimbrial adhesin PapGII (336 aa).

The signal sequence occupies residues 1–20 (MKKWFPALLFSLCVSGESSA). Intrachain disulfides connect Cys64–Cys138 and Cys217–Cys249. D-galactose-binding positions include Glu79 and 124–127 (GYKW).

It belongs to the adhesin PapG family.

The protein resides in the secreted. It localises to the fimbrium. Its function is as follows. Tip adhesin component of type P pili that plays a critical role in kidney infection through targeted interaction with the globoseries glycolipids containing the Gal-alpha(1-4)-Gal disaccharide present on uroepithelial cells. In turn, transcriptionally regulates host gene expression in kidney cells, leading to inflammatory pathway activation and renal tissue damage. Acts thereby as key determinant of invasive uropathogenic E.coli (UPEC), which cause pyelonephritis and urinary-source bacteremia. This is Fimbrial adhesin PapGII from Escherichia coli.